We begin with the raw amino-acid sequence, 813 residues long: Palmitoyltransferase AKR1 (813 aa).

The segment at 1 to 83 (MAKKKSKSKS…PVTTSNETDP (83 aa)) is disordered. At 1–387 (MAKKKSKSKS…KPWVSAKLGK (387 aa)) the chain is on the cytoplasmic side. Low complexity predominate over residues 9–24 (KSSSPKPKVSSTAAKP). A compositionally biased stretch (polar residues) spans 28–46 (DNQQNIENVQDSPSALQQQ). Positions 47-78 (SATAEESENTATTATPSEGTTATTESSPVTTS) are enriched in low complexity. ANK repeat units follow at residues 133 to 162 (PTLA…VLVN), 167 to 196 (DEIT…NPNQ), 201 to 231 (LKAS…DPNL), 235 to 264 (QTYN…STDS), 276 to 305 (SNRT…DVSK), and 309 to 338 (SLFI…DIYF). The helical transmembrane segment at 388–408 (IITFLTPYFLLPLSFNVLSMG) threads the bilayer. Over 409 to 412 (GDQG) the chain is Lumenal. A helical transmembrane segment spans residues 413-433 (GFIIPKLILAIGILGGGIYLL). Topologically, residues 434–452 (NKLIISQYIFDDKKLAKSP) are cytoplasmic. A helical membrane pass occupies residues 453–473 (ILAGVFSATAFWSVLVWLYNI). At 474–485 (LPTTFIHNFFAN) the chain is on the lumenal side. Residues 486–506 (VIMAILIAIFTWSFFKAMFIN) traverse the membrane as a helical segment. The Cytoplasmic portion of the chain corresponds to 507–579 (PGFVPTPADN…YNDIGVRNHK (73 aa)). Residues 536–586 (HFCVNSFVRKPLRSRYSKHNKRLIARFDHSCPWVYNDIGVRNHKIFITFVY) form the DHHC domain. Residue C566 is the S-palmitoyl cysteine intermediate of the active site. The helical transmembrane segment at 580-600 (IFITFVYSLNMAIFVFLYLSL) threads the bilayer. The Lumenal portion of the chain corresponds to 601–642 (QYFDKVKDQYDSDDEGEGEGFVCSILGDDMCYGYKNHHFHFN). A helical membrane pass occupies residues 643–663 (VFMWDLFQCVWVSFLCIVQTF). Over 664–813 (QILKGLTTWE…VDYYTLYSYH (150 aa)) the chain is Cytoplasmic.

It belongs to the DHHC palmitoyltransferase family. AKR/ZDHHC17 subfamily.

The protein resides in the early endosome membrane. Its subcellular location is the golgi apparatus membrane. It catalyses the reaction L-cysteinyl-[protein] + hexadecanoyl-CoA = S-hexadecanoyl-L-cysteinyl-[protein] + CoA. Functionally, palmitoyltransferase specific for casein kinase 1. In Candida albicans (strain SC5314 / ATCC MYA-2876) (Yeast), this protein is Palmitoyltransferase AKR1 (AKR1).